An 803-amino-acid chain; its full sequence is Phenylalanine--tRNA ligase beta subunit (803 aa).

The 113-residue stretch at 39-151 (SMKFSGIKIG…KNAIIGEDIK (113 aa)) folds into the tRNA-binding domain. Residues 406 to 482 (PKKILIKLYK…RFYGFEKIPI (77 aa)) enclose the B5 domain. 2 residues coordinate Mg(2+): Asp-466 and Asp-470. An FDX-ACB domain is found at 707-800 (SDIPFNYRDI…LKKNFLIEIR (94 aa)).

Belongs to the phenylalanyl-tRNA synthetase beta subunit family. Type 1 subfamily. In terms of assembly, tetramer of two alpha and two beta subunits. The cofactor is Mg(2+).

It is found in the cytoplasm. It carries out the reaction tRNA(Phe) + L-phenylalanine + ATP = L-phenylalanyl-tRNA(Phe) + AMP + diphosphate + H(+). The sequence is that of Phenylalanine--tRNA ligase beta subunit from Wigglesworthia glossinidia brevipalpis.